The following is a 183-amino-acid chain: MTATAQQLEFLKNSIKSIQDYPKPGILFRDVTSLLEDPKAYALSIELLVERYKNAGITKVVGTEARGFLFGAPVALGLGVGFVPVRKPRKLPRETIAETYALEYGTDQLEIHVDAIKPGDNVLVVDDLLATGGTIEATVKLIRRLGGKVTDAAFIINLFDLGGEQRLEKQGITCYSLVPFPGH.

The protein belongs to the purine/pyrimidine phosphoribosyltransferase family. In terms of assembly, homodimer.

It localises to the cytoplasm. The enzyme catalyses AMP + diphosphate = 5-phospho-alpha-D-ribose 1-diphosphate + adenine. It functions in the pathway purine metabolism; AMP biosynthesis via salvage pathway; AMP from adenine: step 1/1. In terms of biological role, catalyzes a salvage reaction resulting in the formation of AMP, that is energically less costly than de novo synthesis. In Salmonella heidelberg (strain SL476), this protein is Adenine phosphoribosyltransferase.